The sequence spans 413 residues: CinA-like protein (413 aa).

This sequence belongs to the CinA family.

The chain is CinA-like protein from Desulfotalea psychrophila (strain LSv54 / DSM 12343).